We begin with the raw amino-acid sequence, 317 residues long: L-lactate dehydrogenase (317 aa).

NAD(+)-binding positions include valine 17, aspartate 38, lysine 43, tyrosine 69, and 83 to 84 (GA). The substrate site is built by glutamine 86 and arginine 92. NAD(+) contacts are provided by residues serine 105, 122–124 (ATN), and serine 147. 124–127 (NPVD) lines the substrate pocket. 152-155 (DTAR) lines the substrate pocket. Residues arginine 157 and histidine 172 each coordinate beta-D-fructose 1,6-bisphosphate. The Proton acceptor role is filled by histidine 179. Tyrosine 224 carries the phosphotyrosine modification. Residue threonine 233 participates in substrate binding.

Belongs to the LDH/MDH superfamily. LDH family. Homotetramer.

The protein localises to the cytoplasm. It carries out the reaction (S)-lactate + NAD(+) = pyruvate + NADH + H(+). It participates in fermentation; pyruvate fermentation to lactate; (S)-lactate from pyruvate: step 1/1. With respect to regulation, allosterically activated by fructose 1,6-bisphosphate (FBP). Functionally, catalyzes the conversion of lactate to pyruvate. The sequence is that of L-lactate dehydrogenase from Geobacillus thermodenitrificans (strain NG80-2).